The following is a 198-amino-acid chain: Succinate dehydrogenase [ubiquinone] cytochrome b subunit, mitochondrial (198 aa).

The transit peptide at M1–K50 directs the protein to the mitochondrion. Over N51–S99 the chain is Mitochondrial matrix. Positions 93 and 97 each coordinate a ubiquinone. A helical transmembrane segment spans residues L100–L120. The Mitochondrial intermembrane segment spans residues G121–K139. Residues I140–A160 form a helical membrane-spanning segment. A heme-binding site is contributed by H156. Residues I161 to K175 are Mitochondrial matrix-facing. The helical transmembrane segment at G176–L196 threads the bilayer. Topologically, residues T197 to L198 are mitochondrial intermembrane.

Belongs to the cytochrome b560 family. As to quaternary structure, forms part of complex II containing four subunits: a flavoprotein (FP), an iron-sulfur protein (IP) and a cytochrome b composed of two integral membrane proteins. The cofactor is heme.

It localises to the mitochondrion inner membrane. The protein operates within carbohydrate metabolism; tricarboxylic acid cycle. In terms of biological role, membrane-anchoring mono-heme cytochrome b subunit of succinate dehydrogenase (SDH) that is involved in system II of the mitochondrial electron transport chain and is responsible for transferring electrons from succinate to ubiquinone (coenzyme Q). SDH3 and SDH4 form the membrane dimer that anchors the catalytic dimer formed by SDH1 and SDH2 to the matrix surface of the mitochondrial inner membrane. Electrons originating from the catalytic dimer enter the membrane dimer for ubiquinone reduction. In Saccharomyces cerevisiae (strain ATCC 204508 / S288c) (Baker's yeast), this protein is Succinate dehydrogenase [ubiquinone] cytochrome b subunit, mitochondrial (SDH3).